Here is a 433-residue protein sequence, read N- to C-terminus: N-lysine methyltransferase SMYD2 (433 aa).

An SET domain is found at 7–241 (GGLERFCSAG…PGDEVFTSYI (235 aa)). 17 to 19 (KGR) lines the S-adenosyl-L-methionine pocket. 8 residues coordinate Zn(2+): cysteine 52, cysteine 55, cysteine 65, cysteine 68, cysteine 74, cysteine 78, histidine 86, and cysteine 90. Residues 52-90 (CECCFARKEGLSKCGRCKQAFYCDVECQKEDWPLHKLEC) form an MYND-type zinc finger. Residues histidine 137, 206-207 (NH), and 258-260 (YFF) contribute to the S-adenosyl-L-methionine site. Residue serine 283 is modified to Phosphoserine.

It belongs to the class V-like SAM-binding methyltransferase superfamily. In terms of assembly, interacts with RNA polymerase II and HELZ. Interacts with SIN3A and HDAC1. Interacts (via MYND-type zinc finger) with EPB41L3. Interacts (via SET domain) with p53/TP53. Interacts with RB1 and HSP90AA1.

Its subcellular location is the cytoplasm. It is found in the cytosol. The protein resides in the nucleus. The enzyme catalyses L-lysyl(4)-[histone H3] + 3 S-adenosyl-L-methionine = N(6),N(6),N(6)-trimethyl-L-lysyl(4)-[histone H3] + 3 S-adenosyl-L-homocysteine + 3 H(+). It carries out the reaction L-lysyl-[protein] + S-adenosyl-L-methionine = N(6)-methyl-L-lysyl-[protein] + S-adenosyl-L-homocysteine + H(+). Protein-lysine N-methyltransferase that methylates both histones and non-histone proteins, including p53/TP53 and RB1. Specifically trimethylates histone H3 'Lys-4' (H3K4me3) in vivo. The activity requires interaction with HSP90alpha. Shows even higher methyltransferase activity on p53/TP53. Monomethylates 'Lys-370' of p53/TP53, leading to decreased DNA-binding activity and subsequent transcriptional regulation activity of p53/TP53. Monomethylates RB1 at 'Lys-860'. The protein is N-lysine methyltransferase SMYD2 (Smyd2) of Rattus norvegicus (Rat).